The following is a 78-amino-acid chain: Large ribosomal subunit protein bL28 (78 aa).

The disordered stretch occupies residues methionine 1 to alanine 24.

This sequence belongs to the bacterial ribosomal protein bL28 family.

The sequence is that of Large ribosomal subunit protein bL28 from Aeromonas salmonicida (strain A449).